The chain runs to 261 residues: Triosephosphate isomerase (261 aa).

Residues Asn-11 and Lys-13 each coordinate D-glyceraldehyde 3-phosphate. Catalysis depends on His-102, which acts as the Electrophile. Glu-174 serves as the catalytic Proton acceptor. D-glyceraldehyde 3-phosphate contacts are provided by Gly-180, Leu-239, and Gly-241.

The protein belongs to the triosephosphate isomerase family. In terms of assembly, homodimer.

It catalyses the reaction D-glyceraldehyde 3-phosphate = dihydroxyacetone phosphate. It functions in the pathway carbohydrate biosynthesis; gluconeogenesis. Its pathway is carbohydrate degradation; glycolysis; D-glyceraldehyde 3-phosphate from glycerone phosphate: step 1/1. Catalyzes the interconversion of glyceraldehyde 3-phosphate and dihydroxyacetone phosphate in the glycolytic and gluconeogenic pathways. The chain is Triosephosphate isomerase from Entamoeba histolytica (strain ATCC 30459 / HM-1:IMSS / ABRM).